A 335-amino-acid polypeptide reads, in one-letter code: Holliday junction branch migration complex subunit RuvB (335 aa).

The large ATPase domain (RuvB-L) stretch occupies residues 4-184 (ADRIISSNAQ…FGIVQRLEFY (181 aa)). ATP contacts are provided by residues I23, R24, G65, K68, T69, T70, 131 to 133 (EDY), R174, Y184, and R221. T69 provides a ligand contact to Mg(2+). Residues 185 to 255 (SVEDLTSIVA…IAKSALSMLD (71 aa)) are small ATPAse domain (RuvB-S). The tract at residues 258–335 (QAGFDYLDRK…RHFGLDKLTE (78 aa)) is head domain (RuvB-H). DNA is bound by residues R294, R313, and R318.

It belongs to the RuvB family. Homohexamer. Forms an RuvA(8)-RuvB(12)-Holliday junction (HJ) complex. HJ DNA is sandwiched between 2 RuvA tetramers; dsDNA enters through RuvA and exits via RuvB. An RuvB hexamer assembles on each DNA strand where it exits the tetramer. Each RuvB hexamer is contacted by two RuvA subunits (via domain III) on 2 adjacent RuvB subunits; this complex drives branch migration. In the full resolvosome a probable DNA-RuvA(4)-RuvB(12)-RuvC(2) complex forms which resolves the HJ.

It localises to the cytoplasm. The catalysed reaction is ATP + H2O = ADP + phosphate + H(+). Its function is as follows. The RuvA-RuvB-RuvC complex processes Holliday junction (HJ) DNA during genetic recombination and DNA repair, while the RuvA-RuvB complex plays an important role in the rescue of blocked DNA replication forks via replication fork reversal (RFR). RuvA specifically binds to HJ cruciform DNA, conferring on it an open structure. The RuvB hexamer acts as an ATP-dependent pump, pulling dsDNA into and through the RuvAB complex. RuvB forms 2 homohexamers on either side of HJ DNA bound by 1 or 2 RuvA tetramers; 4 subunits per hexamer contact DNA at a time. Coordinated motions by a converter formed by DNA-disengaged RuvB subunits stimulates ATP hydrolysis and nucleotide exchange. Immobilization of the converter enables RuvB to convert the ATP-contained energy into a lever motion, pulling 2 nucleotides of DNA out of the RuvA tetramer per ATP hydrolyzed, thus driving DNA branch migration. The RuvB motors rotate together with the DNA substrate, which together with the progressing nucleotide cycle form the mechanistic basis for DNA recombination by continuous HJ branch migration. Branch migration allows RuvC to scan DNA until it finds its consensus sequence, where it cleaves and resolves cruciform DNA. The protein is Holliday junction branch migration complex subunit RuvB of Mannheimia succiniciproducens (strain KCTC 0769BP / MBEL55E).